The chain runs to 316 residues: PAK4-inhibitor inka1 (316 aa).

The segment at 108–130 is disordered; sequence YSEVSGSSLRGEEDDIVEEESET. Positions 119 to 128 are enriched in acidic residues; that stretch reads EEDDIVEEES. 2 inka box regions span residues 182 to 219 and 289 to 316; these read DSQD…DLPE and SDIA…AGFL.

This sequence belongs to the INKA family. As to quaternary structure, interacts with pak4/pak5.

The protein resides in the nucleus. The protein localises to the cytoplasm. Inhibitor of the serine/threonine-protein kinase pak4/pak5. Acts by binding pak4/pak5 in a substrate-like manner, inhibiting the protein kinase activity. Required for the proper migration of neural crest cells during embryonic development, probably by inhibiting pak4/pak5. This Xenopus laevis (African clawed frog) protein is PAK4-inhibitor inka1.